A 113-amino-acid chain; its full sequence is Retrotransposon Gag-like protein 8C (113 aa).

Belongs to the FAM127 family.

This Homo sapiens (Human) protein is Retrotransposon Gag-like protein 8C.